The sequence spans 282 residues: S-formylglutathione hydrolase (282 aa).

A2 carries the post-translational modification N-acetylalanine. K4 bears the N6-succinyllysine mark. Residue S149 is the Charge relay system of the active site. K200 carries the N6-acetyllysine modification. Residues D226 and H260 each act as charge relay system in the active site.

The protein belongs to the esterase D family. In terms of assembly, homodimer.

The protein resides in the cytoplasm. It localises to the cytoplasmic vesicle. It carries out the reaction S-formylglutathione + H2O = formate + glutathione + H(+). Functionally, serine hydrolase involved in the detoxification of formaldehyde. This chain is S-formylglutathione hydrolase (Esd), found in Mus musculus (Mouse).